We begin with the raw amino-acid sequence, 240 residues long: MYLRRAVSKTLALPLRAPPNPAPLGKDASLRRMSSNRFPGSSGSNMIYYLVVGVTVSAGGYYAYKTVTSDQAKHTEHKTNLKEKTKAEIHPFQGEKENVAETEKASSEAPEELIVEAEVVDAEESPSATVVVIKEASACPGHVEAAPETTAVSAETGPEVTDAAARETTEVNPETTPEVTNAALDEAVTIDNDKDTTKNETSDEYAELEEENSPAESESSAGDDLQEEASVGSEAASAQG.

At 1-40 (MYLRRAVSKTLALPLRAPPNPAPLGKDASLRRMSSNRFPG) the chain is on the cytoplasmic side. A helical; Anchor for type IV membrane protein membrane pass occupies residues 41–63 (SSGSNMIYYLVVGVTVSAGGYYA). The Mitochondrial intermembrane segment spans residues 64–240 (YKTVTSDQAK…VGSEAASAQG (177 aa)). Positions 166 to 240 (RETTEVNPET…VGSEAASAQG (75 aa)) are disordered. Over residues 170–181 (EVNPETTPEVTN) the composition is skewed to low complexity. Residues 191–201 (DNDKDTTKNET) are compositionally biased toward basic and acidic residues. A compositionally biased stretch (acidic residues) spans 202-213 (SDEYAELEEENS). The segment covering 228 to 240 (EASVGSEAASAQG) has biased composition (low complexity).

Interacts with RHOT1/Miro-1, TRAK1/OIP106 and TRAK2/GRIF1. Interacts with RHOT2/Miro-2. Expressed in the brain, adrenal gland and corneal endothelium (CE). Expressed in steroid-producing cells of the ovary and testis (at protein level). Expressed in steroid-producing cells of the ovary and testis. Weakly expressed in placenta. Expressed in corneal endothelial cells.

It localises to the mitochondrion. The protein resides in the mitochondrion outer membrane. The protein localises to the mitochondrion inner membrane. Its function is as follows. Plays a role in the trafficking of mitochondria along microtubules. Regulates the kinesin-mediated axonal transport of mitochondria to nerve terminals along microtubules during hypoxia. Participates in the translocation of TRAK2/GRIF1 from the cytoplasm to the mitochondrion. Also plays a role in steroidogenesis through maintenance of mitochondrial abundance and morphology. Plays an inhibitory role during neocortex development by regulating mitochondrial morphology, distribution and motility in neocortical neurons. The polypeptide is Protein MGARP (MGARP) (Homo sapiens (Human)).